Reading from the N-terminus, the 409-residue chain is NADH-quinone oxidoreductase subunit D (409 aa).

Belongs to the complex I 49 kDa subunit family. In terms of assembly, NDH-1 is composed of 14 different subunits. Subunits NuoB, C, D, E, F, and G constitute the peripheral sector of the complex.

Its subcellular location is the cell inner membrane. The catalysed reaction is a quinone + NADH + 5 H(+)(in) = a quinol + NAD(+) + 4 H(+)(out). Its function is as follows. NDH-1 shuttles electrons from NADH, via FMN and iron-sulfur (Fe-S) centers, to quinones in the respiratory chain. The immediate electron acceptor for the enzyme in this species is believed to be ubiquinone. Couples the redox reaction to proton translocation (for every two electrons transferred, four hydrogen ions are translocated across the cytoplasmic membrane), and thus conserves the redox energy in a proton gradient. This Helicobacter pylori (strain P12) protein is NADH-quinone oxidoreductase subunit D.